Here is a 619-residue protein sequence, read N- to C-terminus: Pentatricopeptide repeat-containing protein At3g22470, mitochondrial (619 aa).

A mitochondrion-targeting transit peptide spans 1–28 (MIQRLIPLNRKASNFTQILEKGTSLLHY). 15 PPR repeats span residues 69–103 (TPID…GIEH), 104–138 (DMYT…GYEP), 139–173 (DTIT…KQRP), 174–208 (DLVT…GFQP), 209–243 (DEVT…NIKA), 244–278 (SVVQ…GIKA), 279–313 (DVVT…NIIP), 314–348 (DVVT…GIAP), 349–383 (DTIT…GCEP), 384–418 (DIVT…GLIP), 419–453 (NTIT…GVPP), 454–488 (SVVT…RMTL), 489–523 (GIGI…GVKP), 524–558 (DVVT…GCTP), and 559–593 (DDFT…GFSA).

Belongs to the PPR family. P subfamily.

The protein resides in the mitochondrion. In Arabidopsis thaliana (Mouse-ear cress), this protein is Pentatricopeptide repeat-containing protein At3g22470, mitochondrial.